Here is a 372-residue protein sequence, read N- to C-terminus: Cytochrome b (372 aa).

4 consecutive transmembrane segments (helical) span residues 25–45 (FGSM…FLAI), 69–90 (WMMQ…YIHI), 105–125 (WLSG…GYVL), and 170–190 (FFAL…IHIM). His-75 and His-89 together coordinate heme b. Heme b contacts are provided by His-174 and His-188. An a ubiquinone-binding site is contributed by His-193. Transmembrane regions (helical) follow at residues 218–238 (HKDM…MSFM), 280–300 (LGGT…PFTH), 312–332 (LMQF…WAAT), and 339–358 (FTTI…IMNP).

The protein belongs to the cytochrome b family. In terms of assembly, the cytochrome bc1 complex contains 3 respiratory subunits (MT-CYB, CYC1 and UQCRFS1), 2 core proteins (UQCRC1 and UQCRC2) and probably 6 low-molecular weight proteins. Requires heme b as cofactor.

The protein resides in the mitochondrion inner membrane. In terms of biological role, component of the ubiquinol-cytochrome c reductase complex (complex III or cytochrome b-c1 complex) that is part of the mitochondrial respiratory chain. The b-c1 complex mediates electron transfer from ubiquinol to cytochrome c. Contributes to the generation of a proton gradient across the mitochondrial membrane that is then used for ATP synthesis. The protein is Cytochrome b (MT-CYB) of Pantherophis obsoletus (Black ratsnake).